A 135-amino-acid chain; its full sequence is Large ribosomal subunit protein uL16c (135 aa).

This sequence belongs to the universal ribosomal protein uL16 family. Part of the 50S ribosomal subunit.

The protein localises to the plastid. It localises to the chloroplast. This is Large ribosomal subunit protein uL16c from Cucumis sativus (Cucumber).